Here is a 106-residue protein sequence, read N- to C-terminus: Small ribosomal subunit protein uS17 (106 aa).

Belongs to the universal ribosomal protein uS17 family. Part of the 30S ribosomal subunit.

Functionally, one of the primary rRNA binding proteins, it binds specifically to the 5'-end of 16S ribosomal RNA. The sequence is that of Small ribosomal subunit protein uS17 from Methanosphaera stadtmanae (strain ATCC 43021 / DSM 3091 / JCM 11832 / MCB-3).